A 180-amino-acid polypeptide reads, in one-letter code: MWRQRRKWEGPSHPWQKQRLIIEKRLMKEYGLKNKRELWIAETIARKWRAYARYLNAKQAAGQDISEEKERFLTKLKKLGVLSENAELDDVLDLTVKDVLERRLQTMLVRKGLAKTMKQARQFIVHGHIMVNGEVVDAPSYLVKKEEEDKIEFVPFSPLANPEHPARKLEQKEETNEESA.

Positions 102 to 174 (RRLQTMLVRK…PARKLEQKEE (73 aa)) constitute an S4 RNA-binding domain. The tract at residues 154 to 180 (VPFSPLANPEHPARKLEQKEETNEESA) is disordered. The span at 164–174 (HPARKLEQKEE) shows a compositional bias: basic and acidic residues.

It belongs to the universal ribosomal protein uS4 family. Part of the 30S ribosomal subunit. Contacts protein S5. The interaction surface between S4 and S5 is involved in control of translational fidelity.

Its function is as follows. One of the primary rRNA binding proteins, it binds directly to 16S rRNA where it nucleates assembly of the body of the 30S subunit. With S5 and S12 plays an important role in translational accuracy. This chain is Small ribosomal subunit protein uS4, found in Nanoarchaeum equitans (strain Kin4-M).